A 194-amino-acid chain; its full sequence is Leucyl/phenylalanyl-tRNA--protein transferase (194 aa).

Belongs to the L/F-transferase family.

The protein localises to the cytoplasm. The catalysed reaction is N-terminal L-lysyl-[protein] + L-leucyl-tRNA(Leu) = N-terminal L-leucyl-L-lysyl-[protein] + tRNA(Leu) + H(+). The enzyme catalyses N-terminal L-arginyl-[protein] + L-leucyl-tRNA(Leu) = N-terminal L-leucyl-L-arginyl-[protein] + tRNA(Leu) + H(+). It catalyses the reaction L-phenylalanyl-tRNA(Phe) + an N-terminal L-alpha-aminoacyl-[protein] = an N-terminal L-phenylalanyl-L-alpha-aminoacyl-[protein] + tRNA(Phe). Functionally, functions in the N-end rule pathway of protein degradation where it conjugates Leu, Phe and, less efficiently, Met from aminoacyl-tRNAs to the N-termini of proteins containing an N-terminal arginine or lysine. In Chlorobium limicola (strain DSM 245 / NBRC 103803 / 6330), this protein is Leucyl/phenylalanyl-tRNA--protein transferase.